The following is a 162-amino-acid chain: Cytochrome c-type biogenesis protein CcmE (162 aa).

The Cytoplasmic portion of the chain corresponds to 1 to 7; that stretch reads MTRKQRR. The helical; Signal-anchor for type II membrane protein transmembrane segment at 8–28 threads the bilayer; that stretch reads LTMIGGALVVLGIAAALVLNA. Residues 29-162 lie on the Periplasmic side of the membrane; that stretch reads LRDSIVFFST…EASSKQEVSQ (134 aa). His122 and Tyr126 together coordinate heme. The interval 140–162 is disordered; it reads HWKDDYGAQPGAAEASSKQEVSQ.

Belongs to the CcmE/CycJ family.

It is found in the cell inner membrane. In terms of biological role, heme chaperone required for the biogenesis of c-type cytochromes. Transiently binds heme delivered by CcmC and transfers the heme to apo-cytochromes in a process facilitated by CcmF and CcmH. The chain is Cytochrome c-type biogenesis protein CcmE from Nitrobacter winogradskyi (strain ATCC 25391 / DSM 10237 / CIP 104748 / NCIMB 11846 / Nb-255).